The sequence spans 132 residues: Guanyl-specific ribonuclease C2 (132 aa).

An N-terminal signal peptide occupies residues 1–26 (MLYNKLITIAALLVPALAAPQGLDVR). Disulfide bonds link C28–C36 and C32–C129. The active site involves H66. E84 acts as the Proton acceptor in catalysis. The Proton donor role is filled by H118.

Belongs to the ribonuclease N1/T1 family.

Its subcellular location is the secreted. It carries out the reaction [RNA] containing guanosine + H2O = an [RNA fragment]-3'-guanosine-3'-phosphate + a 5'-hydroxy-ribonucleotide-3'-[RNA fragment].. This Aspergillus clavatus (strain ATCC 1007 / CBS 513.65 / DSM 816 / NCTC 3887 / NRRL 1 / QM 1276 / 107) protein is Guanyl-specific ribonuclease C2.